The chain runs to 100 residues: Small ribosomal subunit protein uS14c (100 aa).

The tract at residues 1-31 is disordered; that stretch reads MARKSLIQREKKRQKLEQKYHSIRRSSKKEI.

This sequence belongs to the universal ribosomal protein uS14 family. As to quaternary structure, part of the 30S ribosomal subunit.

It localises to the plastid. It is found in the chloroplast. Binds 16S rRNA, required for the assembly of 30S particles. The protein is Small ribosomal subunit protein uS14c of Solanum bulbocastanum (Wild potato).